A 579-amino-acid chain; its full sequence is Nuclear hormone receptor family member nhr-22 (579 aa).

A DNA-binding region (nuclear receptor) is located at residues Ser93 to Ala173. NR C4-type zinc fingers lie at residues Cys96 to Cys117 and Cys133 to Cys161. Over residues Leu233 to Pro242 the composition is skewed to low complexity. The tract at residues Leu233–Thr256 is disordered. Residues Glu304–Arg577 enclose the NR LBD domain.

The protein belongs to the nuclear hormone receptor family.

It is found in the nucleus. In terms of biological role, orphan nuclear receptor. The protein is Nuclear hormone receptor family member nhr-22 (nhr-22) of Caenorhabditis elegans.